The chain runs to 402 residues: S-adenosylmethionine synthase (402 aa).

Histidine 15 serves as a coordination point for ATP. Aspartate 17 provides a ligand contact to Mg(2+). Residue glutamate 43 coordinates K(+). L-methionine-binding residues include glutamate 56 and glutamine 99. Positions 99–109 are flexible loop; it reads QSPDIAQGVDT. Residues 174-176, 247-248, aspartate 256, 262-263, alanine 279, and lysine 283 contribute to the ATP site; these read DGK, RF, and RK. Aspartate 256 contributes to the L-methionine binding site. Lysine 287 is an L-methionine binding site.

Belongs to the AdoMet synthase family. Homotetramer; dimer of dimers. Mg(2+) serves as cofactor. K(+) is required as a cofactor.

It localises to the cytoplasm. It carries out the reaction L-methionine + ATP + H2O = S-adenosyl-L-methionine + phosphate + diphosphate. The protein operates within amino-acid biosynthesis; S-adenosyl-L-methionine biosynthesis; S-adenosyl-L-methionine from L-methionine: step 1/1. Its function is as follows. Catalyzes the formation of S-adenosylmethionine (AdoMet) from methionine and ATP. The overall synthetic reaction is composed of two sequential steps, AdoMet formation and the subsequent tripolyphosphate hydrolysis which occurs prior to release of AdoMet from the enzyme. This Streptomyces griseus subsp. griseus (strain JCM 4626 / CBS 651.72 / NBRC 13350 / KCC S-0626 / ISP 5235) protein is S-adenosylmethionine synthase.